Consider the following 268-residue polypeptide: tRNA pseudouridine synthase A (268 aa).

Catalysis depends on Asp52, which acts as the Nucleophile. Tyr110 contacts substrate.

It belongs to the tRNA pseudouridine synthase TruA family. As to quaternary structure, homodimer.

The catalysed reaction is uridine(38/39/40) in tRNA = pseudouridine(38/39/40) in tRNA. Formation of pseudouridine at positions 38, 39 and 40 in the anticodon stem and loop of transfer RNAs. This is tRNA pseudouridine synthase A from Prochlorococcus marinus (strain AS9601).